Consider the following 272-residue polypeptide: Putative phosphatase HI_0597 (272 aa).

Catalysis depends on aspartate 11, which acts as the Nucleophile. Aspartate 11 contributes to the Mg(2+) binding site. A phosphate-binding site is contributed by leucine 12. Aspartate 13 lines the Mg(2+) pocket. Residues 45-46 (TG) and lysine 195 contribute to the phosphate site. Residue aspartate 218 participates in Mg(2+) binding. Asparagine 221 is a phosphate binding site.

It belongs to the HAD-like hydrolase superfamily. Cof family. The cofactor is Mg(2+).

The polypeptide is Putative phosphatase HI_0597 (Haemophilus influenzae (strain ATCC 51907 / DSM 11121 / KW20 / Rd)).